We begin with the raw amino-acid sequence, 829 residues long: Isethionate sulfite-lyase (829 aa).

The PFL domain occupies Glu-31 to Leu-699. Residues Arg-188, Gln-192, Cys-467–Glu-469, and Arg-677 each bind 2-hydroxyethane-1-sulfonate. Cys-467 acts as the Cysteine radical intermediate in catalysis. Glu-469 functions as the Proton acceptor in the catalytic mechanism. Residues Asp-706 to Met-829 form the Glycine radical domain. Gly-804 is subject to Glycine radical.

Belongs to the glycyl radical enzyme (GRE) family. Homodimer. Requires the activating protein IslB to generate the key active site glycyl radical on Gly-804 that is involved in catalysis.

The catalysed reaction is 2-hydroxyethane-1-sulfonate = acetaldehyde + sulfite + H(+). It functions in the pathway organosulfur degradation; alkanesulfonate degradation. Involved in an anaerobic respiration pathway that converts the sulfonate isethionate (2-hydroxyethanesulfonate) to ammonia, acetate and sulfide. Catalyzes the radical-mediated C-S bond cleavage of isethionate (2-hydroxyethanesulfonate) to form sulfite and acetaldehyde. This chain is Isethionate sulfite-lyase, found in Oleidesulfovibrio alaskensis (strain ATCC BAA-1058 / DSM 17464 / G20) (Desulfovibrio alaskensis).